A 553-amino-acid polypeptide reads, in one-letter code: Capsid protein VP1 (553 aa).

It belongs to the microviridae F protein family.

The protein resides in the virion. It is found in the host cytoplasm. Its function is as follows. Assembles to form an icosahedral capsid with a T=1 symmetry. This Spiroplasma virus 4 (SpV4) protein is Capsid protein VP1.